The chain runs to 519 residues: 2-isopropylmalate synthase (519 aa).

In terms of domain architecture, Pyruvate carboxyltransferase spans 5-267 (VIIFDTTLRD…TTNVNPMEIS (263 aa)). Mn(2+) is bound by residues Asp-14, His-202, His-204, and Asn-238. Residues 392-519 (RLESINVQSG…KEQLIHIDQV (128 aa)) form a regulatory domain region.

It belongs to the alpha-IPM synthase/homocitrate synthase family. LeuA type 1 subfamily. In terms of assembly, homodimer. The cofactor is Mn(2+).

It localises to the cytoplasm. The catalysed reaction is 3-methyl-2-oxobutanoate + acetyl-CoA + H2O = (2S)-2-isopropylmalate + CoA + H(+). Its pathway is amino-acid biosynthesis; L-leucine biosynthesis; L-leucine from 3-methyl-2-oxobutanoate: step 1/4. Its function is as follows. Catalyzes the condensation of the acetyl group of acetyl-CoA with 3-methyl-2-oxobutanoate (2-ketoisovalerate) to form 3-carboxy-3-hydroxy-4-methylpentanoate (2-isopropylmalate). The chain is 2-isopropylmalate synthase from Psychromonas ingrahamii (strain DSM 17664 / CCUG 51855 / 37).